Consider the following 700-residue polypeptide: Polyribonucleotide nucleotidyltransferase (700 aa).

Mg(2+)-binding residues include D486 and D492. Residues 554-613 form the KH domain; sequence PKIISTTINPDKIREVIGPGGKMINKIIDETGVKIDINDDGRVYIFSSDIQAGKRARSMI. In terms of domain architecture, S1 motif spans 623 to 691; that stretch reads GQVFLGRVIR…KQGRVNLSRK (69 aa).

This sequence belongs to the polyribonucleotide nucleotidyltransferase family. It depends on Mg(2+) as a cofactor.

It is found in the cytoplasm. It carries out the reaction RNA(n+1) + phosphate = RNA(n) + a ribonucleoside 5'-diphosphate. Involved in mRNA degradation. Catalyzes the phosphorolysis of single-stranded polyribonucleotides processively in the 3'- to 5'-direction. The polypeptide is Polyribonucleotide nucleotidyltransferase (Acetivibrio thermocellus (strain ATCC 27405 / DSM 1237 / JCM 9322 / NBRC 103400 / NCIMB 10682 / NRRL B-4536 / VPI 7372) (Clostridium thermocellum)).